We begin with the raw amino-acid sequence, 135 residues long: Large ribosomal subunit protein mL54 (135 aa).

A mitochondrion-targeting transit peptide spans 1 to 14 (MAAAHLLRASRVWA).

Belongs to the mitochondrion-specific ribosomal protein mL54 family. Component of the mitochondrial ribosome large subunit (39S) which comprises a 16S rRNA and about 50 distinct proteins.

It localises to the mitochondrion. The polypeptide is Large ribosomal subunit protein mL54 (Mrpl54) (Mus musculus (Mouse)).